Reading from the N-terminus, the 1914-residue chain is Autophagy-related protein 2 homolog A (1914 aa).

Residues 14–112 enclose the Chorein N-terminal domain; sequence ERVCRYLLQH…LTLQPRQGSG (99 aa). A phosphoserine mark is found at Ser764, Ser869, Ser875, and Ser877. Residues 1222–1243 are disordered; sequence DLHPPPRPPSPTEIAGQKLSES. A phosphoserine mark is found at Ser1246, Ser1282, and Ser1290. The tract at residues 1299–1337 is disordered; that stretch reads GERSGAQAPLPPPGASSHTLGSKAKEHENEEEGDGDTLD. Positions 1327-1337 are enriched in acidic residues; that stretch reads NEEEGDGDTLD. The segment at 1337-1383 is WIPI-interacting; that stretch reads DSDEFCILDAPGLGIAPRDGEPIVTQLHPGPIIVHDGHFSQPLGSTD. Phosphoserine is present on Ser1381. 3 disordered regions span residues 1427–1452, 1589–1634, and 1803–1822; these read LTGP…TQGG, MVPG…SSSD, and RSLQ…QPAD. Over residues 1429–1446 the composition is skewed to low complexity; that stretch reads GPRVSPSRSSGPNRPQNS.

Belongs to the ATG2 family. Interacts with ATG9A (via C-terminus). Interacts with TMEM41B. Interacts with VMP1.

The protein resides in the preautophagosomal structure membrane. It localises to the lipid droplet. The protein localises to the endoplasmic reticulum membrane. It catalyses the reaction a 1,2-diacyl-sn-glycero-3-phospho-L-serine(in) = a 1,2-diacyl-sn-glycero-3-phospho-L-serine(out). The catalysed reaction is a 1,2-diacyl-sn-glycero-3-phosphoethanolamine(in) = a 1,2-diacyl-sn-glycero-3-phosphoethanolamine(out). Lipid transfer protein involved in autophagosome assembly. Tethers the edge of the isolation membrane (IM) to the endoplasmic reticulum (ER) and mediates direct lipid transfer from ER to IM for IM expansion. Binds to the ER exit site (ERES), which is the membrane source for autophagosome formation, and extracts phospholipids from the membrane source and transfers them to ATG9 (ATG9A or ATG9B) to the IM for membrane expansion. Lipid transfer activity is enhanced by WIPI1 and WDR45/WIPI4, which promote ATG2A-association with phosphatidylinositol 3-monophosphate (PI3P)-containing membranes. Also regulates lipid droplets morphology and distribution within the cell. Its function is as follows. (Microbial infection) Mediates the intracellular lifestyle of Cryptococcus neoformans by supporting infection. This is Autophagy-related protein 2 homolog A from Mus musculus (Mouse).